An 845-amino-acid chain; its full sequence is Dynein axonemal assembly factor 5 (845 aa).

HEAT repeat units follow at residues 47–84, 138–175, 180–217, 260–297, 332–369, 523–561, 674–715, and 766–803; these read DVFD…SLPP, ECYP…LADT, PFTE…HMDA, SFFE…QYFN, QRSL…HAEA, NFGQ…LDAA, SESV…MSVE, and AIVK…SHPE.

It belongs to the DNAAF5 family. As to expression, expressed in testis.

It localises to the cytoplasm. It is found in the dynein axonemal particle. Its function is as follows. Cytoplasmic protein involved in the delivery of the dynein machinery to the motile cilium. It is required for the assembly of the axonemal dynein inner and outer arms, two structures attached to the peripheral outer doublet A microtubule of the axoneme, that play a crucial role in cilium motility. The protein is Dynein axonemal assembly factor 5 of Drosophila melanogaster (Fruit fly).